A 579-amino-acid chain; its full sequence is Glutamine--tRNA ligase (579 aa).

Residues 41–51 carry the 'HIGH' region motif; sequence PEPNGYLHIGH. ATP-binding positions include 42-44 and 48-54; these read EPN and HIGHAKA. L-glutamine-binding residues include D74 and Y218. ATP is bound by residues T237, 285–286, and 293–295; these read RL and MSK. A 'KMSKS' region motif is present at residues 292-296; the sequence is VMSKR.

The protein belongs to the class-I aminoacyl-tRNA synthetase family. Monomer.

The protein resides in the cytoplasm. The enzyme catalyses tRNA(Gln) + L-glutamine + ATP = L-glutaminyl-tRNA(Gln) + AMP + diphosphate. This Xanthomonas campestris pv. campestris (strain 8004) protein is Glutamine--tRNA ligase.